A 378-amino-acid chain; its full sequence is Microtubule-associated protein 6 homolog (378 aa).

The segment at V36 to R111 is disordered. Positions I52 to Y62 are enriched in polar residues. Mn regions lie at residues S79 to R99 and E112 to K135. 4 stretches are compositionally biased toward basic and acidic residues: residues K203–R220, N242–P252, P265–S274, and P306–K315. The segment at K203 to E378 is disordered. Residues G237–S260 form a mn 3 region. The span at K322 to K337 shows a compositional bias: basic residues. The span at K359–E378 shows a compositional bias: basic and acidic residues.

It belongs to the STOP family.

The protein localises to the cytoplasm. It localises to the cytoskeleton. Functionally, involved in microtubule stabilization in many cell types, including neuronal cells. Specifically has microtubule cold stabilizing activity. Involved in dendrite morphogenesis and maintenance by regulating lysosomal trafficking. This Xenopus tropicalis (Western clawed frog) protein is Microtubule-associated protein 6 homolog (map6).